Here is a 161-residue protein sequence, read N- to C-terminus: MORN repeat-containing protein 5 (161 aa).

MORN repeat units follow at residues 8–30, 31–53, and 54–75; these read YIGE…TETI, YVGE…SGSQ, and YDAI…DGLH.

In terms of tissue distribution, expressed in sperm (at protein level).

It localises to the cell projection. The protein resides in the cilium. The protein localises to the flagellum. This is MORN repeat-containing protein 5 (MORN5) from Homo sapiens (Human).